The primary structure comprises 178 residues: uncharacterized protein (178 aa).

An N-terminal signal peptide occupies residues 1 to 23 (MTMFKKISVLFFTLILAGCSSWS).

This is an uncharacterized protein from Haemophilus influenzae (strain ATCC 51907 / DSM 11121 / KW20 / Rd).